Here is a 534-residue protein sequence, read N- to C-terminus: 5'-nucleotidase domain-containing protein 3 (534 aa).

Asp-104 serves as the catalytic Nucleophile. Positions 104 and 106 each coordinate Mg(2+). The Proton donor role is filled by Asp-106. 234–242 contacts substrate; sequence KEAIRDVHV. Position 372 (Asp-372) interacts with Mg(2+).

Belongs to the 5'(3')-deoxyribonucleotidase family. It depends on Mg(2+) as a cofactor.

The chain is 5'-nucleotidase domain-containing protein 3 (nt5dc3) from Xenopus tropicalis (Western clawed frog).